Reading from the N-terminus, the 432-residue chain is Serine--tRNA ligase (432 aa).

239–241 is an L-serine binding site; it reads TSE. 270-272 is a binding site for ATP; sequence RSE. Position 293 (glutamate 293) interacts with L-serine. 357-360 lines the ATP pocket; it reads EISS. Position 392 (serine 392) interacts with L-serine.

This sequence belongs to the class-II aminoacyl-tRNA synthetase family. Type-1 seryl-tRNA synthetase subfamily. As to quaternary structure, homodimer. The tRNA molecule binds across the dimer.

It localises to the cytoplasm. The catalysed reaction is tRNA(Ser) + L-serine + ATP = L-seryl-tRNA(Ser) + AMP + diphosphate + H(+). The enzyme catalyses tRNA(Sec) + L-serine + ATP = L-seryl-tRNA(Sec) + AMP + diphosphate + H(+). It functions in the pathway aminoacyl-tRNA biosynthesis; selenocysteinyl-tRNA(Sec) biosynthesis; L-seryl-tRNA(Sec) from L-serine and tRNA(Sec): step 1/1. Catalyzes the attachment of serine to tRNA(Ser). Is also able to aminoacylate tRNA(Sec) with serine, to form the misacylated tRNA L-seryl-tRNA(Sec), which will be further converted into selenocysteinyl-tRNA(Sec). The chain is Serine--tRNA ligase from Methylibium petroleiphilum (strain ATCC BAA-1232 / LMG 22953 / PM1).